The chain runs to 21 residues: Dahlein-5.4 (21 aa).

Expressed by the skin dorsal glands.

Its subcellular location is the secreted. Has no antimicrobial activity. Strongly inhibits the formation of NO by neuronal nitric oxide synthase at micromolar concentrations. The chain is Dahlein-5.4 from Ranoidea dahlii (Dahl's aquatic frog).